A 178-amino-acid chain; its full sequence is Ribosome maturation factor RimM (178 aa).

The 78-residue stretch at 101–178 folds into the PRC barrel domain; the sequence is ADEYYWYQLV…VMRVEWDADF (78 aa).

The protein belongs to the RimM family. In terms of assembly, binds ribosomal protein uS19.

The protein resides in the cytoplasm. An accessory protein needed during the final step in the assembly of 30S ribosomal subunit, possibly for assembly of the head region. Essential for efficient processing of 16S rRNA. May be needed both before and after RbfA during the maturation of 16S rRNA. It has affinity for free ribosomal 30S subunits but not for 70S ribosomes. The chain is Ribosome maturation factor RimM from Pseudomonas putida (strain ATCC 700007 / DSM 6899 / JCM 31910 / BCRC 17059 / LMG 24140 / F1).